The sequence spans 346 residues: Very-long-chain 3-oxoacyl-CoA reductase (346 aa).

Residues 26–46 (SAYFLLAAGSLFVASRALTFV) form a helical membrane-spanning segment. Residues V71, D126, D134, N153, Y220, K224, I253, and S255 each coordinate NADP(+). Y220 functions as the Proton donor in the catalytic mechanism. K224 acts as the Lowers pKa of active site Tyr in catalysis.

It belongs to the short-chain dehydrogenases/reductases (SDR) family.

The protein resides in the endoplasmic reticulum membrane. It catalyses the reaction a very-long-chain (3R)-3-hydroxyacyl-CoA + NADP(+) = a very-long-chain 3-oxoacyl-CoA + NADPH + H(+). Its pathway is lipid metabolism; fatty acid biosynthesis. Its function is as follows. Component of the microsomal membrane bound fatty acid elongation system, which produces the 26-carbon very long-chain fatty acids (VLCFA) from palmitate. Catalyzes the reduction of the 3-ketoacyl-CoA intermediate that is formed in each cycle of fatty acid elongation. VLCFAs serve as precursors for ceramide and sphingolipids. The chain is Very-long-chain 3-oxoacyl-CoA reductase from Aspergillus oryzae (strain ATCC 42149 / RIB 40) (Yellow koji mold).